Reading from the N-terminus, the 355-residue chain is MKKVVVGLSGGVDSSVAAASLKEKGYEVIGLTLWLMQGKGQCCSDGLVDAAQLCEDLDIPHHVVDSRDLFSNNIIDYLVEGYQQGITPLPCSQCNKTVKFGPMLNYARHELDTDTIATGHYARIAYSEKEKRYQLLRAVDRNKDQSYFLYDLDQDLLSGTVFPLGDHTKTETRRMATQLDLHTAEKPESQDLCLIEAHGSMQTFLDQYIETHPGEIVDQEGNILGHHQGVHHFTIGQRRGIGVAAPHPLYVVDLDPGKNRVIVGDRETALKTECMVKRVNWVSIAPPQNPIHAEVQVRYRSKPTGVTIIPLDAEAPGGRVKLVFEDPQFGIAPGQAAVWYDQEILLGGGIIEAFS.

ATP contacts are provided by residues 7–14 (GLSGGVDS) and leucine 33. Residue cysteine 94 is the Nucleophile of the active site. Cysteine 94 and cysteine 193 are oxidised to a cystine. Residue glycine 119 coordinates ATP. The interval 143-145 (KDQ) is interaction with tRNA. Catalysis depends on cysteine 193, which acts as the Cysteine persulfide intermediate. The segment at 298 to 299 (RY) is interaction with tRNA.

The protein belongs to the MnmA/TRMU family.

Its subcellular location is the cytoplasm. The catalysed reaction is S-sulfanyl-L-cysteinyl-[protein] + uridine(34) in tRNA + AH2 + ATP = 2-thiouridine(34) in tRNA + L-cysteinyl-[protein] + A + AMP + diphosphate + H(+). Functionally, catalyzes the 2-thiolation of uridine at the wobble position (U34) of tRNA, leading to the formation of s(2)U34. The chain is tRNA-specific 2-thiouridylase MnmA from Acaryochloris marina (strain MBIC 11017).